The primary structure comprises 192 residues: Probable protein adenylyltransferase y4lH (192 aa).

The region spanning 52–190 is the Fido domain; it reads LDFAHYRALH…LAPLAAEIRR (139 aa). Residues 82-83 and 139-141 each bind ATP; these read KG and GNG.

This sequence belongs to the fic family.

The catalysed reaction is L-tyrosyl-[protein] + ATP = O-(5'-adenylyl)-L-tyrosyl-[protein] + diphosphate. The enzyme catalyses L-threonyl-[protein] + ATP = 3-O-(5'-adenylyl)-L-threonyl-[protein] + diphosphate. Its function is as follows. Probable adenylyltransferase that mediates the addition of adenosine 5'-monophosphate (AMP) to specific residues of target proteins. This is Probable protein adenylyltransferase y4lH from Sinorhizobium fredii (strain NBRC 101917 / NGR234).